Here is a 330-residue protein sequence, read N- to C-terminus: Transcription factor TGA6 (330 aa).

A compositionally biased stretch (polar residues) spans 1–13 (MADTSSRTDVSTD). The disordered stretch occupies residues 1–45 (MADTSSRTDVSTDGDTDHRDLGSDRGHMHAAASDSSDRSKDKLDQ). Basic and acidic residues-rich tracts occupy residues 15–27 (DTDH…DRGH) and 35–45 (SSDRSKDKLDQ). Positions 44-107 (DQKTLRRLAQ…SSGDQAHSTG (64 aa)) constitute a bZIP domain. 2 coiled-coil regions span residues 45-142 (QKTL…HAGD) and 217-233 (INSL…ALSQ). The tract at residues 46–66 (KTLRRLAQNREAARKSRLRKK) is basic motif. The tract at residues 72–86 (LENSRLKLTQLEQEL) is leucine-zipper. The DOG1 domain maps to 111–327 (ALAFDAEHSR…RALSSLWLAR (217 aa)).

The protein belongs to the bZIP family. In terms of assembly, binds DNA as a dimer. Interacts with NPR1, NPR3 and NPR4. Interacts with GRXC9/GRX480. In terms of tissue distribution, expressed predominantly in roots and flowers.

The protein localises to the nucleus. Its function is as follows. Transcriptional activator that binds specifically to the DNA sequence 5'-TGACG-3'. Recognizes ocs elements like the as-1 motif of the cauliflower mosaic virus 35S promoter. Binding to the as-1-like cis elements mediate auxin- and salicylic acid-inducible transcription. May be involved in the induction of the systemic acquired resistance (SAR) via its interaction with NPR1. Could also bind to the Hex-motif (5'-TGACGTGG-3') another cis-acting element found in plant histone promoters. In Arabidopsis thaliana (Mouse-ear cress), this protein is Transcription factor TGA6 (TGA6).